A 1682-amino-acid chain; its full sequence is Cilia- and flagella-associated protein 43 (1682 aa).

6 WD repeats span residues Asn168–His207, Pro262–Leu305, Asp315–Lys354, Glu358–Lys397, Leu488–Ile527, and Ser697–Ala738. The tract at residues Arg767–Glu790 is disordered. Coiled-coil stretches lie at residues Lys926–Gln960 and Ser1171–Arg1223.

This sequence belongs to the CFAP43 family. In terms of tissue distribution, expressed in testis. Expressed in the lung, brain, oviduct and nasal cavity.

It localises to the cell projection. The protein localises to the cilium. Its subcellular location is the flagellum. It is found in the cytoplasm. The protein resides in the cytoskeleton. It localises to the flagellum axoneme. The protein localises to the cilium axoneme. Its function is as follows. Flagellar protein involved in sperm flagellum axoneme organization and function. Involved in the regulation of the beating frequency of motile cilia on the epithelial cells of the respiratory tract. In Mus musculus (Mouse), this protein is Cilia- and flagella-associated protein 43.